Here is a 434-residue protein sequence, read N- to C-terminus: Glutamate-1-semialdehyde 2,1-aminomutase 2 (434 aa).

The residue at position 270 (Lys-270) is an N6-(pyridoxal phosphate)lysine.

The protein belongs to the class-III pyridoxal-phosphate-dependent aminotransferase family. HemL subfamily. Homodimer. The cofactor is pyridoxal 5'-phosphate.

It is found in the cytoplasm. It catalyses the reaction (S)-4-amino-5-oxopentanoate = 5-aminolevulinate. It functions in the pathway porphyrin-containing compound metabolism; protoporphyrin-IX biosynthesis; 5-aminolevulinate from L-glutamyl-tRNA(Glu): step 2/2. In Bacillus cereus (strain G9842), this protein is Glutamate-1-semialdehyde 2,1-aminomutase 2.